A 460-amino-acid chain; its full sequence is GTPase Der (460 aa).

EngA-type G domains follow at residues 3-167 (FTFA…PEPD) and 189-364 (IRVA…AVWN). GTP is bound by residues 9–16 (GRPNVGKS), 56–60 (DTAGL), 119–122 (NKSE), 195–202 (GRPNAGKS), 242–246 (DTAGL), and 307–310 (NKWD). The KH-like domain maps to 365–449 (TRVPTAALNR…PVRIMLREKA (85 aa)).

It belongs to the TRAFAC class TrmE-Era-EngA-EngB-Septin-like GTPase superfamily. EngA (Der) GTPase family. In terms of assembly, associates with the 50S ribosomal subunit.

Its function is as follows. GTPase that plays an essential role in the late steps of ribosome biogenesis. This is GTPase Der from Rhodopseudomonas palustris (strain BisB5).